The following is a 462-amino-acid chain: tRNA modification GTPase MnmE (462 aa).

Arg27, Glu89, and Arg128 together coordinate (6S)-5-formyl-5,6,7,8-tetrahydrofolate. In terms of domain architecture, TrmE-type G spans 224 to 383 (GLATAIVGRP…LEAQIAKLFF (160 aa)). Residue Asn234 participates in K(+) binding. Residues 234 to 239 (NVGKSS), 253 to 259 (TDVAGTT), and 278 to 281 (DTAG) contribute to the GTP site. Ser238 lines the Mg(2+) pocket. K(+) is bound by residues Thr253, Val255, and Thr258. Position 259 (Thr259) interacts with Mg(2+). Lys462 is a (6S)-5-formyl-5,6,7,8-tetrahydrofolate binding site.

Belongs to the TRAFAC class TrmE-Era-EngA-EngB-Septin-like GTPase superfamily. TrmE GTPase family. Homodimer. Heterotetramer of two MnmE and two MnmG subunits. K(+) is required as a cofactor.

It localises to the cytoplasm. Functionally, exhibits a very high intrinsic GTPase hydrolysis rate. Involved in the addition of a carboxymethylaminomethyl (cmnm) group at the wobble position (U34) of certain tRNAs, forming tRNA-cmnm(5)s(2)U34. The sequence is that of tRNA modification GTPase MnmE from Latilactobacillus sakei subsp. sakei (strain 23K) (Lactobacillus sakei subsp. sakei).